Consider the following 67-residue polypeptide: Ferredoxin FdxE (67 aa).

Residues C10, V11, Q15, C16, and C54 each contribute to the [3Fe-4S] cluster site.

As to quaternary structure, interacts with the cytochrome P450 143 with high affinity (Kd=84 nM). [3Fe-4S] cluster serves as cofactor.

Ferredoxin that is the redox partner of cytochrome CYP143, a cytochrome P450 encoded by an adjacent gene. In Mycobacterium tuberculosis (strain ATCC 25618 / H37Rv), this protein is Ferredoxin FdxE.